The chain runs to 1011 residues: E3 ubiquitin-protein ligase mib1 (1011 aa).

The MIB/HERC2 1 domain maps to 6–74; the sequence is NNRVMVEGVG…AYDLRIMDSA (69 aa). The ZZ-type zinc finger occupies 80-132; it reads HDGTMCDTCRQQPIIGIRWKCAECTNYDLCTVCYHGDKHHLRHRFYRITTPGS. Zn(2+) is bound by residues Cys85, Cys88, Cys100, Cys103, Cys109, Cys112, His118, and His122. Residues 143–221 form the MIB/HERC2 2 domain; sequence SKKITARGIF…MSDLKCVQDA (79 aa). ANK repeat units lie at residues 430–460, 463–492, 496–525, 529–558, 562–591, 595–627, 631–661, 665–694, and 698–729; these read DLNE…DVNG, AGHT…DVEA, DGDR…DLNA, RRQT…HPSL, EGDT…DVTI, NGFN…IVDE, DGYT…NLDI, NQQT…KLDI, and DGDT…KVDT. 2 RING-type zinc fingers span residues 820-855 and 867-902; these read CMVC…LLCK and CVVC…VQCR. Residues 936 to 963 are a coiled coil; that stretch reads QKDKDNTNVNADVQKLQQQLQDIKEQTM. The RING-type 3 zinc-finger motif lies at 964–997; it reads CPVCLDRLKNMIFMCGHGTCQLCGDRMSECPICR.

The protein resides in the cytoplasm. It localises to the cytoskeleton. It is found in the microtubule organizing center. The protein localises to the centrosome. Its subcellular location is the centriolar satellite. It catalyses the reaction S-ubiquitinyl-[E2 ubiquitin-conjugating enzyme]-L-cysteine + [acceptor protein]-L-lysine = [E2 ubiquitin-conjugating enzyme]-L-cysteine + N(6)-ubiquitinyl-[acceptor protein]-L-lysine.. It participates in protein modification; protein ubiquitination. In terms of biological role, E3 ubiquitin-protein ligase that mediates ubiquitination of Delta receptors, which act as ligands of Notch proteins. Positively regulates the Delta-mediated Notch signaling by ubiquitinating the intracellular domain of Delta, leading to endocytosis of Delta receptors. The chain is E3 ubiquitin-protein ligase mib1 (mib1) from Xenopus laevis (African clawed frog).